Consider the following 1875-residue polypeptide: Neuron navigator 1 (1875 aa).

Methionine 1 is modified (N-acetylmethionine). The tract at residues 1–63 is disordered; that stretch reads MLGSSVKSVQ…GGSGSMAKAS (63 aa). Phosphoserine is present on residues serine 93 and serine 145. Disordered regions lie at residues 115–230 and 280–339; these read SDDM…EERA and SSLR…VGGS. Threonine 162 bears the Phosphothreonine mark. Phosphoserine is present on residues serine 197 and serine 202. Residues 258-283 adopt a coiled-coil conformation; that stretch reads ESQRKRTVQNVLDLRQNLEETMSSLR. The segment covering 280-291 has biased composition (polar residues); that stretch reads SSLRGSQVTHSS. Phosphoserine occurs at positions 299, 311, 315, 365, and 394. Over residues 304 to 318 the composition is skewed to low complexity; it reads PRSVSSLSNRSSPLS. Disordered stretches follow at residues 391-463 and 477-783; these read GYMS…RTDS and SESE…AELP. 2 stretches are compositionally biased toward low complexity: residues 414–428 and 436–456; these read DESS…DASD and NASS…RSST. 4 positions are modified to phosphoserine: serine 455, serine 477, serine 479, and serine 493. A compositionally biased stretch (basic and acidic residues) spans 479-489; sequence SEEKTPKKLEY. Over residues 506 to 522 the composition is skewed to basic and acidic residues; sequence ERPESCDDASKGGELKK. At serine 531 the chain carries Phosphoserine. Threonine 537 is subject to Phosphothreonine. Serine 544 bears the Phosphoserine mark. Threonine 547 is subject to Phosphothreonine. The segment covering 558-569 has biased composition (basic and acidic residues); sequence GKPEGKATDKGK. Phosphothreonine is present on threonine 575. Over residues 584–594 the composition is skewed to basic and acidic residues; that stretch reads AGRDRLSDAKK. Polar residues-rich tracts occupy residues 618 to 638 and 648 to 658; these read GTAT…QKSS and RKTSLDVSNSV. The residue at position 651 (serine 651) is a Phosphoserine. Arginine 690 carries the omega-N-methylarginine modification. Composition is skewed to polar residues over residues 696–712 and 726–735; these read VSSS…QGGL and GRSTPAPVNQ. Residues 733–758 adopt a coiled-coil conformation; the sequence is VNQTDREKEKAKAKAVALDSDNISLK. Phosphoserine is present on residues serine 752, serine 756, serine 762, serine 799, and serine 810. Residues 753 to 772 are compositionally biased toward polar residues; the sequence is DNISLKSIGSPESTPKNQAS. 2 disordered regions span residues 800–840 and 893–982; these read LANL…PLPS and MSLP…SPPA. Low complexity-rich tracts occupy residues 807–818 and 893–902; these read NSNSLDLPSSSD and MSLPSAFPSS. Serine 998 is subject to Phosphoserine. Position 1004 is a phosphothreonine (threonine 1004). Residues 1070–1161 adopt a coiled-coil conformation; the sequence is SSAEERMQSE…SEAQAVIQGA (92 aa). Phosphothreonine is present on threonine 1168. Disordered regions lie at residues 1172–1202, 1242–1306, 1359–1381, and 1808–1841; these read LRIK…KDAD, ATPD…KEVS, VAPG…LSSP, and KLYH…SLDS. Position 1179 is a phosphoserine (serine 1179). The segment covering 1179 to 1198 has biased composition (low complexity); that stretch reads SSDSISSLNSITSHSSIGSS. Residues 1244 to 1259 show a composition bias toward polar residues; that stretch reads PDSSAPSSPKLQHGST. Positions 1260–1281 are enriched in low complexity; it reads ETASPSIKSSTSSSVGTEVTET. At serine 1263 the chain carries Phosphoserine. Positions 1301-1360 form a coiled coil; the sequence is EKKEVSELRSELWEKEMKLTDIRLEALNSAHQLDQLRETMHNMQLEVDLLKAENDRLKVA. Residues 1365-1381 show a composition bias toward polar residues; that stretch reads SGCTPGQVPGSSALSSP. At serine 1380 the chain carries Phosphoserine.

Belongs to the Nav/unc-53 family. In terms of assembly, interacts with tubulin. In terms of tissue distribution, expressed in heart and brain. Present in brain (at protein level). In adult brain, found almost exclusively in areas of secondary neurogenesis from the hippocampus and the subventricular zone.

The protein localises to the cytoplasm. Its subcellular location is the cytoskeleton. May be involved in neuronal migration. The protein is Neuron navigator 1 (Nav1) of Mus musculus (Mouse).